We begin with the raw amino-acid sequence, 504 residues long: Arabinose import ATP-binding protein AraG (504 aa).

ABC transporter domains lie at 8-243 (LSFR…MVGR) and 256-499 (YGEE…MPKV). 40–47 (GENGAGKS) lines the ATP pocket.

The protein belongs to the ABC transporter superfamily. Arabinose importer (TC 3.A.1.2.2) family. As to quaternary structure, the complex is composed of two ATP-binding proteins (AraG), two transmembrane proteins (AraH) and a solute-binding protein (AraF).

It localises to the cell inner membrane. The catalysed reaction is L-arabinose(out) + ATP + H2O = L-arabinose(in) + ADP + phosphate + H(+). Functionally, part of the ABC transporter complex AraFGH involved in arabinose import. Responsible for energy coupling to the transport system. The chain is Arabinose import ATP-binding protein AraG from Shigella flexneri.